A 764-amino-acid chain; its full sequence is Nucleolar transcription factor 1 (764 aa).

M1 carries the post-translational modification N-acetylmethionine. Residues 1–21 (MNGEADCPTDLEMAAPKGQDR) form a disordered region. 2 consecutive DNA-binding regions (HMG box) follow at residues 112–180 (PKKP…ARFR) and 196–264 (PEKP…RDYI). Residue T201 is modified to Phosphothreonine. A phosphoserine mark is found at S273, S336, and S364. Residues 298–362 (TKPPPNSYSL…DYEVELLRFL (65 aa)) constitute a DNA-binding region (HMG box 3). A compositionally biased stretch (basic and acidic residues) spans 370–379 (QQRVLGEEKM). A disordered region spans residues 370 to 411 (QQRVLGEEKMLNINKKQTTSPASKKPSQEGGKGGSEKPKRPV). Residues S389, S412, S433, S435, S484, S495, S546, S584, and S638 each carry the phosphoserine modification. 3 DNA-binding regions (HMG box) span residues 407–475 (PKRP…GGER), 482–549 (PESP…SEMR), and 568–634 (KKPP…DLWV). Residues 456–488 (YKAREAALKAQSERKPGGEREDRGKLPESPKRA) are disordered. A compositionally biased stretch (basic and acidic residues) spans 457–488 (KAREAALKAQSERKPGGEREDRGKLPESPKRA). Positions 546–576 (SEMRAPPAATNSSKKMKFQGEPKKPPMNGYQ) are disordered. Residues 648–764 (YISNKRKNMT…SGDSSDSDSN (117 aa)) are disordered. The segment covering 664-674 (PKSSRTTLQSK) has biased composition (polar residues). Over residues 677 to 745 (SEEDDDEEDD…DDDEDEDNES (69 aa)) the composition is skewed to acidic residues. A compositionally biased stretch (low complexity) spans 746-758 (EGSSSSSSSSGDS).

In terms of assembly, homodimer. Part of Pol I pre-initiation complex (PIC), in which Pol I core assembles with RRN3 and promoter-bound UTBF and SL1/TIF-IB complex. Interacts with TOP2A in the context of Pol I complex. Interacts with TBP. Interacts with TAF1A. Interacts with PHF6. Interacts with CEBPA (isoform 1 and isoform 4). Interacts with DDX11. Interacts with NOP53. Interacts with RASL11A. Interacts with DHX33. Binds to IRS1 and PIK3CA. Interacts with ALKBH2. Post-translationally, phosphorylated and activated by PIK3CA.

It localises to the nucleus. Its subcellular location is the nucleolus. Recognizes the ribosomal RNA gene promoter and activates transcription mediated by RNA polymerase I through cooperative interactions with the transcription factor SL1/TIF-IB complex. It binds specifically to the upstream control element. This is Nucleolar transcription factor 1 (Ubtf) from Rattus norvegicus (Rat).